We begin with the raw amino-acid sequence, 370 residues long: Anhydro-N-acetylmuramic acid kinase (370 aa).

13–20 (GTSMDGVD) is an ATP binding site.

This sequence belongs to the anhydro-N-acetylmuramic acid kinase family.

It carries out the reaction 1,6-anhydro-N-acetyl-beta-muramate + ATP + H2O = N-acetyl-D-muramate 6-phosphate + ADP + H(+). The protein operates within amino-sugar metabolism; 1,6-anhydro-N-acetylmuramate degradation. It participates in cell wall biogenesis; peptidoglycan recycling. Its function is as follows. Catalyzes the specific phosphorylation of 1,6-anhydro-N-acetylmuramic acid (anhMurNAc) with the simultaneous cleavage of the 1,6-anhydro ring, generating MurNAc-6-P. Is required for the utilization of anhMurNAc either imported from the medium or derived from its own cell wall murein, and thus plays a role in cell wall recycling. This is Anhydro-N-acetylmuramic acid kinase from Vibrio vulnificus (strain CMCP6).